Reading from the N-terminus, the 228-residue chain is Small ribosomal subunit protein uS3 (228 aa).

Residues 39-107 (VREYLQDKLK…PVHINIEEIR (69 aa)) enclose the KH type-2 domain.

Belongs to the universal ribosomal protein uS3 family. As to quaternary structure, part of the 30S ribosomal subunit. Forms a tight complex with proteins S10 and S14.

Binds the lower part of the 30S subunit head. Binds mRNA in the 70S ribosome, positioning it for translation. The sequence is that of Small ribosomal subunit protein uS3 from Pseudomonas syringae pv. syringae (strain B728a).